The chain runs to 145 residues: 3-hydroxyacyl-[acyl-carrier-protein] dehydratase FabZ (145 aa).

The active site involves H49.

Belongs to the thioester dehydratase family. FabZ subfamily.

Its subcellular location is the cytoplasm. It catalyses the reaction a (3R)-hydroxyacyl-[ACP] = a (2E)-enoyl-[ACP] + H2O. Functionally, involved in unsaturated fatty acids biosynthesis. Catalyzes the dehydration of short chain beta-hydroxyacyl-ACPs and long chain saturated and unsaturated beta-hydroxyacyl-ACPs. This is 3-hydroxyacyl-[acyl-carrier-protein] dehydratase FabZ from Ehrlichia ruminantium (strain Welgevonden).